The chain runs to 501 residues: Phytoene desaturase (lycopene-forming) (501 aa).

12-45 contributes to the FAD binding site; the sequence is IVIGAGFGGLALAIRLQSAGIATTLVEARDKPGG.

It belongs to the carotenoid/retinoid oxidoreductase family. It depends on FAD as a cofactor.

The catalysed reaction is 15-cis-phytoene + 4 A = all-trans-lycopene + 4 AH2. It functions in the pathway carotenoid biosynthesis; astaxanthin biosynthesis. Its function is as follows. This enzyme converts phytoene into lycopene via the intermediaries of phytofluene, zeta-carotene and neurosporene by the introduction of four double bonds. This Paracoccus sp. (strain N81106 / MBIC 01143) (Agrobacterium aurantiacum) protein is Phytoene desaturase (lycopene-forming) (crtI).